The primary structure comprises 108 residues: Nucleoid-associated protein Bpet3552 (108 aa).

It belongs to the YbaB/EbfC family. As to quaternary structure, homodimer.

It is found in the cytoplasm. It localises to the nucleoid. Its function is as follows. Binds to DNA and alters its conformation. May be involved in regulation of gene expression, nucleoid organization and DNA protection. The chain is Nucleoid-associated protein Bpet3552 from Bordetella petrii (strain ATCC BAA-461 / DSM 12804 / CCUG 43448).